The primary structure comprises 373 residues: Lipoyl synthase (373 aa).

The disordered stretch occupies residues 12-36 (HVVSNDHPSSSPLQPGVKQSGEDKI). 7 residues coordinate [4Fe-4S] cluster: Cys81, Cys86, Cys92, Cys107, Cys111, Cys114, and Ser323. The region spanning 93–312 (FSHGTATFMI…EEYGMALGFS (220 aa)) is the Radical SAM core domain. Positions 346–373 (PAVSSTEHRERHTIASKSASKTESIPHR) are disordered. Positions 360–373 (ASKSASKTESIPHR) are enriched in polar residues.

Belongs to the radical SAM superfamily. Lipoyl synthase family. [4Fe-4S] cluster serves as cofactor.

Its subcellular location is the cytoplasm. It carries out the reaction [[Fe-S] cluster scaffold protein carrying a second [4Fe-4S](2+) cluster] + N(6)-octanoyl-L-lysyl-[protein] + 2 oxidized [2Fe-2S]-[ferredoxin] + 2 S-adenosyl-L-methionine + 4 H(+) = [[Fe-S] cluster scaffold protein] + N(6)-[(R)-dihydrolipoyl]-L-lysyl-[protein] + 4 Fe(3+) + 2 hydrogen sulfide + 2 5'-deoxyadenosine + 2 L-methionine + 2 reduced [2Fe-2S]-[ferredoxin]. It functions in the pathway protein modification; protein lipoylation via endogenous pathway; protein N(6)-(lipoyl)lysine from octanoyl-[acyl-carrier-protein]: step 2/2. Functionally, catalyzes the radical-mediated insertion of two sulfur atoms into the C-6 and C-8 positions of the octanoyl moiety bound to the lipoyl domains of lipoate-dependent enzymes, thereby converting the octanoylated domains into lipoylated derivatives. In Xylella fastidiosa (strain M12), this protein is Lipoyl synthase.